Consider the following 330-residue polypeptide: D-lactate dehydrogenase (330 aa).

NAD(+) contacts are provided by residues 156-157 (RI), Asp-176, 206-207 (VP), 233-235 (AAR), and Asp-259. The active site involves Arg-235. The active site involves Glu-264. His-296 (proton donor) is an active-site residue.

Belongs to the D-isomer specific 2-hydroxyacid dehydrogenase family.

It carries out the reaction (R)-lactate + NAD(+) = pyruvate + NADH + H(+). The sequence is that of D-lactate dehydrogenase (ldhD) from Staphylococcus aureus (strain MSSA476).